The chain runs to 125 residues: Multifunctional methyltransferase subunit TRM112-like protein (125 aa).

Residues arginine 2–serine 119 form the TRM112 domain. At serine 119 the chain carries Phosphoserine.

The protein belongs to the TRM112 family. In terms of assembly, part of the heterodimeric BUD23-TRM112 methyltransferase complex; this heterodimerization is necessary for the metabolic stability and activity of the catalytic subunit BUD23. Part of the heterodimeric N6AMT1-TRM112 methyltransferase complex; this heterodimerization is necessary for S-adenosyl-L-methionine-binding to N6AMT1/HEMK2. Part of the heterodimeric ALKBH8-TRM112 methyltransferase complex. Part of the heterodimeric METTL5-TRM112 methyltransferase complex; this heterodimerization is necessary for the stability of the catalytic subunit METTL5. Part of the heterodimeric THUMPD3-TRM112 methyltransferase complex; this complex forms an active tRNA methyltransferase, where TRMT112 acts as an activator of the catalytic subunit THUMPD3. Part of the heterodimeric THUMPD2-TRM112 methyltransferase complex; this complex forms an active tRNA methyltransferase, where TRMT112 acts as an activator of the catalytic subunit THUMPD2. Part of the heterodimeric TRMT11-TRM112 methyltransferase complex; this complex forms an active tRNA methyltransferase, where TRMT112 acts as an activator of the catalytic subunit TRMT11.

It localises to the nucleus. The protein localises to the nucleoplasm. It is found in the cytoplasm. Its subcellular location is the perinuclear region. Acts as an activator of both rRNA/tRNA and protein methyltransferases. Together with methyltransferase BUD23, methylates the N(7) position of a guanine in 18S rRNA. The heterodimer with HEMK2/N6AMT1 catalyzes N5-methylation of ETF1 on 'Gln-185', using S-adenosyl L-methionine as methyl donor. The heterodimer with ALKBH8 catalyzes the methylation of 5-carboxymethyl uridine to 5-methylcarboxymethyl uridine at the wobble position of the anticodon loop in target tRNA species. Together with methyltransferase THUMPD3, catalyzes the formation of N(2)-methylguanosine at position 6 in a broad range of tRNA substrates and at position 7 of tRNA(Trp). Involved in the pre-rRNA processing steps leading to small-subunit rRNA production. Together with methyltransferase METTL5, specifically methylates the 6th position of adenine in position 1832 of 18S rRNA. In Bos taurus (Bovine), this protein is Multifunctional methyltransferase subunit TRM112-like protein (TRMT112).